A 377-amino-acid polypeptide reads, in one-letter code: Nitric oxide reductase FlRd-NAD(+) reductase (377 aa).

This sequence belongs to the FAD-dependent oxidoreductase family. The cofactor is FAD.

It is found in the cytoplasm. The enzyme catalyses 2 reduced [nitric oxide reductase rubredoxin domain] + NAD(+) + H(+) = 2 oxidized [nitric oxide reductase rubredoxin domain] + NADH. It functions in the pathway nitrogen metabolism; nitric oxide reduction. In terms of biological role, one of at least two accessory proteins for anaerobic nitric oxide (NO) reductase. Reduces the rubredoxin moiety of NO reductase. The chain is Nitric oxide reductase FlRd-NAD(+) reductase from Klebsiella pneumoniae (strain 342).